The primary structure comprises 482 residues: Pancreatic lipase-related protein 2 (482 aa).

Positions 1–30 (MPMDVRGCLFPSVQMLLCWLVSLLLATVGG) are cleaved as a signal peptide. A disulfide bond links cysteine 34 and cysteine 40. The N-linked (GlcNAc...) asparagine glycan is linked to asparagine 92. Positions 106–118 (IHGFIDKGEEGWL) are required for galactolipase activity. A disulfide bond links cysteine 122 and cysteine 133. Catalysis depends on serine 184, which acts as the Nucleophile. The active-site Charge relay system is the aspartate 208. Ca(2+)-binding residues include glutamate 219, arginine 222, aspartate 224, and aspartate 227. Cysteine 269 and cysteine 293 are joined by a disulfide. A required for galactolipase activity region spans residues 270 to 292 (QKNILSTIVDINGIWEGTRNFAA). Histidine 295 acts as the Charge relay system in catalysis. 2 disulfides stabilise this stretch: cysteine 317/cysteine 328 and cysteine 331/cysteine 336. Residues asparagine 366 and asparagine 441 are each glycosylated (N-linked (GlcNAc...) asparagine). In terms of domain architecture, PLAT spans 370–482 (WRYKVSVTLS…EDVLQSLYPC (113 aa)). Cysteine 466 and cysteine 482 are joined by a disulfide.

It belongs to the AB hydrolase superfamily. Lipase family. In terms of tissue distribution, expressed in acinar cells of pancreas (at protein level).

The protein localises to the secreted. It localises to the zymogen granule membrane. Its subcellular location is the cell projection. It is found in the neuron projection. The catalysed reaction is a triacylglycerol + H2O = a diacylglycerol + a fatty acid + H(+). It carries out the reaction a 1,2-diacyl-3-O-(beta-D-galactosyl)-sn-glycerol + 2 H2O = 3-beta-D-galactosyl-sn-glycerol + 2 a fatty acid + 2 H(+). It catalyses the reaction 1,2,3-tri-(9Z-octadecenoyl)-glycerol + H2O = di-(9Z)-octadecenoylglycerol + (9Z)-octadecenoate + H(+). The enzyme catalyses di-(9Z)-octadecenoylglycerol + H2O = (9Z-octadecenoyl)-glycerol + (9Z)-octadecenoate + H(+). The catalysed reaction is (9Z-octadecenoyl)-glycerol + H2O = glycerol + (9Z)-octadecenoate + H(+). It carries out the reaction 1-(9Z-octadecenoyl)-glycerol + H2O = glycerol + (9Z)-octadecenoate + H(+). It catalyses the reaction 1,2,3-tripropanoylglycerol + H2O = dipropanoylglycerol + propanoate + H(+). The enzyme catalyses 1,2,3-tributanoylglycerol + H2O = dibutanoylglycerol + butanoate + H(+). The catalysed reaction is 1,2,3-trioctanoylglycerol + H2O = dioctanoylglycerol + octanoate + H(+). It carries out the reaction 1,2-didecanoylglycerol + H2O = decanoylglycerol + decanoate + H(+). It catalyses the reaction long chain 1,2-diacyl-3-O-beta-D-galactosyl-sn-glycerol + H2O = long chain acyl-3-O-beta-D-galactosyl-sn-glycerol + a fatty acid + H(+). The enzyme catalyses 1,2-dioctanoyl-3-O-beta-D-galactosyl-sn-glycerol + H2O = octanoyl-3-(beta-D-galactosyl)-sn-glycerol + octanoate + H(+). The catalysed reaction is 1,2-didodecanoyl-3-beta-D-galactosyl-sn-glycerol + H2O = dodecanoyl-3-beta-D-galactosyl-sn-glycerol + dodecanoate + H(+). It carries out the reaction 1-beta-D-galactosyl-2,3-didodecanoyl-sn-glycerol + H2O = 1-beta-D-galactosyl-dodecanoyl-sn-glycerol + dodecanoate + H(+). It catalyses the reaction a 1,2-diacyl-3-O-[alpha-D-galactosyl-(1-&gt;6)-beta-D-galactosyl]-sn-glycerol + H2O = acyl-3-O-[alpha-D-galactosyl-(1-&gt;6)-beta-D-galactosyl]-sn-glycerol + a fatty acid + H(+). The enzyme catalyses long chain 1,2-diacyl-3-O-[alpha-D-galactosyl-(1-&gt;6)-beta-D-galactosyl]-sn-glycerol + H2O = long chain acyl-3-O-[alpha-D-galactosyl-(1-&gt;6)-beta-D-galactosyl]-sn-glycerol + a fatty acid + H(+). The catalysed reaction is 1,2-dioctanoyl-3-O-[alpha-D-galactosyl-(1-&gt;6)-beta-D-galactosyl]-sn-glycerol + H2O = octanoyl-3-O-[alpha-D-galactosyl-(1-&gt;6)-beta-D-galactosyl]-sn-glycerol + octanoate + H(+). It carries out the reaction 1,2-didodecanoyl-3-O-[alpha-D-galactosyl-(1-&gt;6)-beta-D-galactosyl]-sn-glycerol + H2O = dodecanoyl-3-O-[alpha-D-galactosyl-(1-&gt;6)-beta-D-galactosyl]-sn-glycerol + dodecanoate + H(+). It catalyses the reaction a 1,2-diacyl-sn-glycero-3-phosphocholine + H2O = a monoacyl-sn-glycero-3-phosphocholine + a fatty acid + H(+). Its pathway is glycerolipid metabolism; triacylglycerol degradation. It functions in the pathway glycolipid metabolism. With respect to regulation, CLPS stimulates triacylglycerol lipase activity. Triacylglycerol lipase activity is not inhibited by increasing bile salt concentration. Its function is as follows. Lipase that primarily hydrolyzes triglycerides and galactosylglycerides. In neonates, may play a major role in pancreatic digestion of dietary fats such as milk fat globules enriched in long-chain triglycerides. Hydrolyzes short-, medium- and long-chain fatty acyls in triglycerides without apparent positional specificity. Can completely deacylate triacylglycerols. When the liver matures and bile salt synthesis increases, likely functions mainly as a galactolipase and monoacylglycerol lipase. Hydrolyzes monogalactosyldiglycerols (MGDG) and digalactosyldiacylglycerols (DGDG) present in a plant-based diet, releasing long-chain polyunsaturated fatty acids. Hydrolyzes medium- and long-chain fatty acyls in galactolipids. May act together with LIPF to hydrolyze partially digested triglycerides. Hydrolyzes long-chain monoglycerides with high efficiency. In cytotoxic T cells, contributes to perforin-dependent cell lysis, but is unlikely to mediate direct cytotoxicity. Also has low phospholipase activity. In neurons, required for the localization of the phospholipid 1-oleoyl-2-palmitoyl-PC (OPPC) to neurite tips through acyl chain remodeling of membrane phospholipids. The resulting OPPC-rich lipid membrane domain recruits the t-SNARE protein STX4 by selectively interacting with the STX4 transmembrane domain and this promotes surface expression of the dopamine transporter SLC6A3/DAT at neurite tips by facilitating fusion of SLC6A3-containing transport vesicles with the plasma membrane. This Mus musculus (Mouse) protein is Pancreatic lipase-related protein 2.